The chain runs to 255 residues: 2-dehydro-3,6-dideoxy-6-sulfogluconate aldolase (255 aa).

Catalysis depends on His-38, which acts as the Proton acceptor. Residues Glu-141 and Asp-167 each coordinate a divalent metal cation.

This sequence belongs to the HpcH/HpaI aldolase family. In terms of assembly, homohexamer; trimer of dimers. Requires a divalent metal cation as cofactor.

The catalysed reaction is 2-dehydro-3,6-dideoxy-6-sulfo-D-gluconate = (2S)-3-sulfolactaldehyde + pyruvate. Functionally, catalyzes the retro-aldol cleavage of 2-dehydro-3,6-dideoxy-6-sulfo-D-gluconate to (2S)-3-sulfolactaldehyde and pyruvate. Is involved in a degradation pathway of sulfoquinovose (SQ) that allows P.putida SQ1 to use SQ as the sole carbon and energy source for growth. This is 2-dehydro-3,6-dideoxy-6-sulfogluconate aldolase from Pseudomonas putida (Arthrobacter siderocapsulatus).